Consider the following 290-residue polypeptide: uncharacterized protein (290 aa).

The HTH lysR-type domain maps to 1–61; sequence MVMNMNHLHI…RDKHHGLMLT (61 aa). The H-T-H motif DNA-binding region spans 20-39; it reads ITEAAKELFISQPAVSKAIK.

Belongs to the LysR transcriptional regulatory family.

This is an uncharacterized protein from Bacillus subtilis (strain 168).